A 122-amino-acid chain; its full sequence is ATP-dependent Clp protease adapter protein ClpS (122 aa).

Belongs to the ClpS family. In terms of assembly, binds to the N-terminal domain of the chaperone ClpA.

In terms of biological role, involved in the modulation of the specificity of the ClpAP-mediated ATP-dependent protein degradation. The protein is ATP-dependent Clp protease adapter protein ClpS of Pseudomonas fluorescens (strain SBW25).